We begin with the raw amino-acid sequence, 524 residues long: MTTTPKSEQDRVIIFDTTLRDGEQCPGATMTFEEKLNVARMLDDMGVDVIEAGYPFASDGDFEAVHEIAKRSKNSVICGLSRASHKDIDRCAEAIKPAERGRIHTFLSTSPVHMKYKLQMEAAQVYEMVISSVTRARNHTDDVEWSAEDATRTEFDFLCRCIEAAIKAGATTINLPDTVGYAVPEEYREMFRKVRETVPNSDKARFSVHCHNDLGMAVANSMAGVAGGARQIECTINGIGERAGNAALEELVMAMRVRQDKLPYWNNIETTMLTHASKTVSAATSFPVQYNKAIVGRNAFAHESGIHQDGMIKNAQTYEIMTPETVGVKGTSLVMGKHSGRAGLIHKLEELGYKLSRNQIEDVFVRFKALADRKKDVYDEDIEALVDEQLLHGQDQIKLNSLTVIAGTHGPQRATMKLDVDGQIRIEEAEGNGPVDAVFNCIKALVPHDAKLELYQVHAVTEGTDAQAEVSVRLSHEGRSMTARAADPDTLVASAKAYLGALNKIVAKRQRDVREAVPAVAAAG.

One can recognise a Pyruvate carboxyltransferase domain in the interval 12–274; that stretch reads VIIFDTTLRD…WNNIETTMLT (263 aa). Positions 21, 209, 211, and 245 each coordinate Mn(2+). Residues 398–524 are regulatory domain; that stretch reads KLNSLTVIAG…EAVPAVAAAG (127 aa).

Belongs to the alpha-IPM synthase/homocitrate synthase family. LeuA type 1 subfamily. In terms of assembly, homodimer. Mn(2+) serves as cofactor.

Its subcellular location is the cytoplasm. The enzyme catalyses 3-methyl-2-oxobutanoate + acetyl-CoA + H2O = (2S)-2-isopropylmalate + CoA + H(+). It functions in the pathway amino-acid biosynthesis; L-leucine biosynthesis; L-leucine from 3-methyl-2-oxobutanoate: step 1/4. Its function is as follows. Catalyzes the condensation of the acetyl group of acetyl-CoA with 3-methyl-2-oxobutanoate (2-ketoisovalerate) to form 3-carboxy-3-hydroxy-4-methylpentanoate (2-isopropylmalate). This chain is 2-isopropylmalate synthase, found in Rhodopseudomonas palustris (strain HaA2).